We begin with the raw amino-acid sequence, 304 residues long: ULP1-interacting protein 4 (304 aa).

A disordered region spans residues 72–269 (DEYPKEVDEH…SIVKEGDANT (198 aa)). The segment covering 73–83 (EYPKEVDEHSN) has biased composition (basic and acidic residues). Residues 129–149 (TPSLKGNVTFPSPKTAISQDG) are compositionally biased toward polar residues. Residue Ser140 is modified to Phosphoserine. The segment covering 155–183 (ETTRKERKYEHAPLNEVPVERDPKEENKE) has biased composition (basic and acidic residues). Phosphoserine occurs at positions 185 and 205.

As to quaternary structure, interacts with ULP1.

The protein resides in the endoplasmic reticulum membrane. Its subcellular location is the mitochondrion outer membrane. It localises to the nucleus envelope. The polypeptide is ULP1-interacting protein 4 (UIP4) (Saccharomyces cerevisiae (strain ATCC 204508 / S288c) (Baker's yeast)).